The primary structure comprises 126 residues: Aspartate 1-decarboxylase (126 aa).

The Schiff-base intermediate with substrate; via pyruvic acid role is filled by Ser25. At Ser25 the chain carries Pyruvic acid (Ser). Residue Thr57 participates in substrate binding. Tyr58 acts as the Proton donor in catalysis. A substrate-binding site is contributed by 73–75 (GAA).

The protein belongs to the PanD family. In terms of assembly, heterooctamer of four alpha and four beta subunits. Pyruvate serves as cofactor. Is synthesized initially as an inactive proenzyme, which is activated by self-cleavage at a specific serine bond to produce a beta-subunit with a hydroxyl group at its C-terminus and an alpha-subunit with a pyruvoyl group at its N-terminus.

The protein resides in the cytoplasm. It carries out the reaction L-aspartate + H(+) = beta-alanine + CO2. It participates in cofactor biosynthesis; (R)-pantothenate biosynthesis; beta-alanine from L-aspartate: step 1/1. Its function is as follows. Catalyzes the pyruvoyl-dependent decarboxylation of aspartate to produce beta-alanine. The chain is Aspartate 1-decarboxylase from Proteus mirabilis (strain HI4320).